A 127-amino-acid chain; its full sequence is Basic leucine zipper transcriptional factor ATF-like 3 (127 aa).

The interval 1-72 is disordered; that stretch reads MSQGLPAAGS…LHEEYESLEQ (72 aa). 2 positions are modified to phosphoserine: Ser-2 and Ser-31. Residues 35 to 98 enclose the bZIP domain; it reads DDRKVRRREK…KHLTEALKEH (64 aa). A basic motif region spans residues 37–62; sequence RKVRRREKNRVAAQRSRKKQTQKADK. Residues 58–67 show a composition bias toward basic and acidic residues; it reads QKADKLHEEY. The tract at residues 63–91 is leucine-zipper; the sequence is LHEEYESLEQENTMLRREIGKLTEELKHL.

This sequence belongs to the bZIP family. Heterodimer; heterodimerizes with JUN family proteins. Interacts with JUN.

It is found in the nucleus. Its function is as follows. AP-1 family transcription factor that controls the differentiation of CD8(+) thymic conventional dendritic cells in the immune system. Required for development of CD8-alpha(+) classical dendritic cells (cDCs) and related CD103(+) dendritic cells that cross-present antigens to CD8 T-cells and produce interleukin-12 (IL12) in response to pathogens. Acts via the formation of a heterodimer with JUN family proteins that recognizes and binds DNA sequence 5'-TGA[CG]TCA-3' and regulates expression of target genes. In Homo sapiens (Human), this protein is Basic leucine zipper transcriptional factor ATF-like 3 (BATF3).